The following is a 99-amino-acid chain: Large ribosomal subunit protein bL28 (99 aa).

Belongs to the bacterial ribosomal protein bL28 family.

The sequence is that of Large ribosomal subunit protein bL28 from Rhizobium etli (strain CIAT 652).